Here is a 215-residue protein sequence, read N- to C-terminus: uncharacterized protein (215 aa).

The interval 25 to 48 is disordered; sequence LKSASPGPAPASQQASSFGSAPAQ. Low complexity predominate over residues 27–47; the sequence is SASPGPAPASQQASSFGSAPA.

This is an uncharacterized protein from Homo sapiens (Human).